Here is a 167-residue protein sequence, read N- to C-terminus: Leptin (167 aa).

An N-terminal signal peptide occupies residues 1 to 21 (MRCGSLCRFLWLWSCLPYIEA). Cys-117 and Cys-167 are joined by a disulfide.

The protein belongs to the leptin family.

It is found in the secreted. In terms of biological role, key player in the regulation of energy balance and body weight control. Once released into the circulation, has central and peripheral effects by binding LEPR, found in many tissues, which results in the activation of several major signaling pathways. In the hypothalamus, acts as an appetite-regulating factor that induces a decrease in food intake and an increase in energy consumption by inducing anorexinogenic factors and suppressing orexigenic neuropeptides, also regulates bone mass and secretion of hypothalamo-pituitary-adrenal hormones. In the periphery, increases basal metabolism, influences reproductive function, regulates pancreatic beta-cell function and insulin secretion, is pro-angiogenic for endothelial cell and affects innate and adaptive immunity. In the arcuate nucleus of the hypothalamus, activates by depolarization POMC neurons inducing FOS and SOCS3 expression to release anorexigenic peptides and inhibits by hyperpolarization NPY neurons inducing SOCS3 with a consequent reduction on release of orexigenic peptides. In addition to its known satiety inducing effect, has a modulatory role in nutrient absorption. In the intestine, reduces glucose absorption by enterocytes by activating PKC and leading to a sequential activation of p38, PI3K and ERK signaling pathways which exerts an inhibitory effect on glucose absorption. Acts as a growth factor on certain tissues, through the activation of different signaling pathways increases expression of genes involved in cell cycle regulation such as CCND1, via JAK2-STAT3 pathway, or VEGFA, via MAPK1/3 and PI3K-AKT1 pathways. May also play an apoptotic role via JAK2-STAT3 pathway and up-regulation of BIRC5 expression. Pro-angiogenic, has mitogenic activity on vascular endothelial cells and plays a role in matrix remodeling by regulating the expression of matrix metalloproteinases (MMPs) and tissue inhibitors of metalloproteinases (TIMPs). In innate immunity, modulates the activity and function of neutrophils by increasing chemotaxis and the secretion of oxygen radicals. Increases phagocytosis by macrophages and enhances secretion of pro-inflammatory mediators. Increases cytotoxic ability of NK cells. Plays a pro-inflammatory role, in synergy with IL1B, by inducing NOS2 which promotes the production of IL6, IL8 and Prostaglandin E2, through a signaling pathway that involves JAK2, PI3K, MAP2K1/MEK1 and MAPK14/p38. In adaptive immunity, promotes the switch of memory T-cells towards T helper-1 cell immune responses. Increases CD4(+)CD25(-) T-cell proliferation and reduces autophagy during TCR (T-cell receptor) stimulation, through MTOR signaling pathway activation and BCL2 up-regulation. This chain is Leptin (LEP), found in Halichoerus grypus (Gray seal).